The chain runs to 393 residues: MSSVPYNSQLPISNHLEYDEDEKKSRGSKLGLKYKMIYWRKTLCSSLARWRKLILLISLALFLFIWISDSTISRNPSTTSFQGQNSNDNKLSNTGSSINSKRYVPPYSKRSRWSFWNQDPRIVIILAANEGGGVLRWKNEQEWAIEGISIENKKAYAKRHGYALTIKDLTTSKRYSHEYREGWQKVDILRQTFREFPNAEWFWWLDLDTMIMEPSKSLEEHIFDRLETLADRELKSFNPLNLRDDIPYVDYSEEMEFLITQDCGGFNLGSFLIKNSEWSKLLLDMWWDPVLYEQKHMVWEHREQDALEALYENEPWIRSRIGFLPLRTINAFPPGACSEYSGDSRYFYSEKDHDFVVNMAGCNFGRDCWGEMQYYTTLMEKLNRKWYTRFFFP.

Topologically, residues 1-52 (MSSVPYNSQLPISNHLEYDEDEKKSRGSKLGLKYKMIYWRKTLCSSLARWRK) are cytoplasmic. The chain crosses the membrane as a helical; Signal-anchor for type II membrane protein span at residues 53-73 (LILLISLALFLFIWISDSTIS). Over 74–393 (RNPSTTSFQG…RKWYTRFFFP (320 aa)) the chain is Lumenal. Positions 77 to 97 (STTSFQGQNSNDNKLSNTGSS) are disordered.

The protein belongs to the glycosyltransferase 34 family. Component of the M-Pol II complex composed of ANP1, MNN9, MNN10, MNN11 and HOC1.

It localises to the endoplasmic reticulum membrane. It is found in the golgi apparatus. The protein resides in the cis-Golgi network membrane. Required for polarized growth and efficient budding. Functionally, the M-Pol II complex possesses alpha-1,6-mannosyltransferase activity and is probably involved in the elongation of the mannan backbone of N-linked glycans on cell wall and periplasmic proteins. The sequence is that of Probable alpha-1,6-mannosyltransferase MNN10 (MNN10) from Saccharomyces cerevisiae (strain ATCC 204508 / S288c) (Baker's yeast).